The primary structure comprises 289 residues: Testis-expressed protein 26 (289 aa).

A disordered region spans residues Met1–Trp26. Mn regions lie at residues Ala30–Gly42, Gln69–Lys83, Ile144–Ala157, Asp179–Pro193, and Gln233–Phe247.

The sequence is that of Testis-expressed protein 26 (TEX26) from Homo sapiens (Human).